Reading from the N-terminus, the 143-residue chain is Trypsin inhibitor CMc (143 aa).

The first 24 residues, 1–24 (MASCSQHLLSAVAIFSVLAGVATA), serve as a signal peptide directing secretion.

The protein belongs to the protease inhibitor I6 (cereal trypsin/alpha-amylase inhibitor) family. In terms of tissue distribution, endosperm.

It localises to the secreted. In terms of biological role, trypsin inhibitor. No alpha-amylase inhibition detected. The polypeptide is Trypsin inhibitor CMc (ITR2) (Hordeum vulgare (Barley)).